The following is a 90-amino-acid chain: Cell division protein CrgA (90 aa).

The interval 1-26 (MPKAKVTKNSIAPVSSNPSANRTPVK) is disordered. Over residues 7 to 26 (TKNSIAPVSSNPSANRTPVK) the composition is skewed to polar residues. 2 helical membrane passes run 38–58 (VIMF…YLVG) and 69–89 (AWNY…TMGW).

This sequence belongs to the CrgA family.

The protein localises to the cell membrane. Its function is as follows. Involved in cell division. This Corynebacterium efficiens (strain DSM 44549 / YS-314 / AJ 12310 / JCM 11189 / NBRC 100395) protein is Cell division protein CrgA.